We begin with the raw amino-acid sequence, 631 residues long: MSKSHAAYIDYALRRTTNMPVEMMGTDVVRLKDYQHFVARVFLGLDSMHSLLLFHETGVGKTMTTVYILKHLKDIYTNWAIILLVKKALIEDPWMNTILRYAPEITKDCIFINYDDQNFRNKFFTNIKTINSKSRICVIIDECHNFISKSLIKEDGKIRPTRSVYNFLSKTIALKNHKMICLSATPIVNSVQEFTMLVNLLRPGSLQHQSLFENKRLVDEKELVSKLGGLCSYIVNNEFSIFDDVEGSASFAKKTVLMRYVNMSKKQEEIYQKAKLAEIKTGISSFRILRRMATTFTFDSFPERQNRDPGEYAQEIATLYNDFKNSLRDREFSKSALDTFKKGELLKGDASAADISLFTELKEKSVKFIDVCLGILASHGKCLVFEPFVNQSGIEILLLYFKVFGISNIEFSSRTKDTRIKAVAEFNQESNTNGECIKTCVFSSSGGEGISFFSINDIFILDMTWNEASLRQIVGRAIRLNSHVLTPPERRYVNVHFIMARLSNGMPTVDEDLFEIIQSKSKEFVQLFRVFKHTSLEWIHANEKDFSPIDNESGWKTLVSRAIDLSSKKNITNKLIEGTNIWYSNSNRLMSINRGFKGVDGRVYDVDGNYLHDMPDNPVIKIHDGKLIYIF.

One can recognise a Helicase ATP-binding domain in the interval F42–G204. Residue H55–T62 coordinates ATP. The short motif at D141 to H144 is the DEXH box element. Residues K367–K532 form the Helicase C-terminal domain.

The protein belongs to the helicase family. NPH I subfamily. Monomer.

It catalyses the reaction a ribonucleoside 5'-triphosphate + H2O = a ribonucleoside 5'-diphosphate + phosphate + H(+). Functionally, serves two roles in transcription; it acts in concert with viral termination factor/capping enzyme to catalyze release of UUUUUNU-containing nascent RNA from the elongation complex, and it acts by itself as a polymerase elongation factor to facilitate readthrough of intrinsic pause sites. This chain is Nucleoside triphosphatase I (NPH1), found in Homo sapiens (Human).